A 194-amino-acid chain; its full sequence is Kallikrein-like enzyme LV-Ka (194 aa).

Intrachain disulfides connect Cys7–Cys99, Cys44–Cys192, Cys78–Cys146, Cys110–Cys125, and Cys136–Cys161. The Peptidase S1 domain maps to 36-185 (LNQEDKFICP…YTEWIQSIIA (150 aa)). Catalysis depends on Ser140, which acts as the Charge relay system.

The protein belongs to the peptidase S1 family. Snake venom subfamily. In terms of assembly, monomer. In terms of processing, N-glycosylated. As to expression, expressed by the venom gland.

Its subcellular location is the secreted. With respect to regulation, completely inhibited by the serine protease inhibitors NPGB and PMSF, partially inhibited by benzamidines, and weakly or not inhibited by SBTI and EDTA. In terms of biological role, shows kallikrein-like activity, releasing bradykinin from kininogen. Also activates plasminogen, which is also a plasma kallikrein activity. Is active upon the kallikrein substrates S-2266 and S-2302, suggesting a preference for Arg in P1 position. In vivo, lowers blood pressure after intravenous injection in rat. In Lachesis muta muta (Bushmaster), this protein is Kallikrein-like enzyme LV-Ka.